The sequence spans 225 residues: Uridylate kinase (225 aa).

9–10 contacts ATP; it reads GS. Position 46 (Gly46) interacts with UMP. Positions 47 and 51 each coordinate ATP. Residues Asp67 and 115–121 each bind UMP; that span reads THPAHTT. ATP contacts are provided by Thr141, Asn142, Tyr147, and Asp150.

This sequence belongs to the UMP kinase family. Homohexamer.

The protein resides in the cytoplasm. The enzyme catalyses UMP + ATP = UDP + ADP. It participates in pyrimidine metabolism; CTP biosynthesis via de novo pathway; UDP from UMP (UMPK route): step 1/1. Inhibited by UTP. In terms of biological role, catalyzes the reversible phosphorylation of UMP to UDP. The chain is Uridylate kinase from Methanococcus vannielii (strain ATCC 35089 / DSM 1224 / JCM 13029 / OCM 148 / SB).